A 415-amino-acid chain; its full sequence is Serine hydroxymethyltransferase (415 aa).

(6S)-5,6,7,8-tetrahydrofolate contacts are provided by residues Leu121 and 125–127; that span reads GHL. At Lys230 the chain carries N6-(pyridoxal phosphate)lysine. (6S)-5,6,7,8-tetrahydrofolate-binding positions include Glu246 and 354-356; that span reads SPF.

It belongs to the SHMT family. Homodimer. Requires pyridoxal 5'-phosphate as cofactor.

The protein resides in the cytoplasm. The enzyme catalyses (6R)-5,10-methylene-5,6,7,8-tetrahydrofolate + glycine + H2O = (6S)-5,6,7,8-tetrahydrofolate + L-serine. It participates in one-carbon metabolism; tetrahydrofolate interconversion. Its pathway is amino-acid biosynthesis; glycine biosynthesis; glycine from L-serine: step 1/1. In terms of biological role, catalyzes the reversible interconversion of serine and glycine with tetrahydrofolate (THF) serving as the one-carbon carrier. This reaction serves as the major source of one-carbon groups required for the biosynthesis of purines, thymidylate, methionine, and other important biomolecules. Also exhibits THF-independent aldolase activity toward beta-hydroxyamino acids, producing glycine and aldehydes, via a retro-aldol mechanism. This chain is Serine hydroxymethyltransferase, found in Bdellovibrio bacteriovorus (strain ATCC 15356 / DSM 50701 / NCIMB 9529 / HD100).